Here is a 314-residue protein sequence, read N- to C-terminus: Olfactory receptor 11H7 (314 aa).

Residues 1 to 24 (MNNSQISTVTQFVLLGFPGPWKIQ) lie on the Extracellular side of the membrane. An N-linked (GlcNAc...) asparagine glycan is attached at Asn-2. Residues 25-45 (IIFFSMILLVYIFTLTGNMAI) traverse the membrane as a helical segment. At 46–57 (ICAVRWDHRLHT) the chain is on the cytoplasmic side. A helical transmembrane segment spans residues 58 to 78 (PMYVLLANFSFLEIWYVTCTV). At 79 to 97 (PNMLVNFFSKTKTISFSGC) the chain is on the extracellular side. The cysteines at positions 97 and 179 are disulfide-linked. A helical transmembrane segment spans residues 98–118 (FTQFHFFFSLGTTECFFLCVM). Residues 119-142 (AYDRYLAICHPLHYPSIMTGQLCG) are Cytoplasmic-facing. The helical transmembrane segment at 143–163 (ILVSLCWLIGFLGHSISIFFI) threads the bilayer. Over 164 to 201 (FQLPFCGPNIIDHFLCDVDPLMALSSAPTHIIGHVFHS) the chain is Extracellular. A helical transmembrane segment spans residues 202 to 222 (VSSLFINLTMVYILGSYTLVL). The Cytoplasmic portion of the chain corresponds to 223–244 (RTVLQVPSSAGWQKAISTCGSH). Residues 245-265 (LVVVSLFYGAIMLMYVSPTPG) form a helical membrane-spanning segment. Residues 266 to 271 (NSVAMH) lie on the Extracellular side of the membrane. Residues 272–292 (KLITLIYSVVTPVLNPLIYSL) traverse the membrane as a helical segment. The Cytoplasmic portion of the chain corresponds to 293–314 (RNKDMKYALHHVFCGMRIIQRS).

Belongs to the G-protein coupled receptor 1 family.

It is found in the cell membrane. Functionally, odorant receptor. Activated by isovaleric acid. This is Olfactory receptor 11H7 (OR11H7) from Homo sapiens (Human).